The primary structure comprises 432 residues: Transcriptional adapter 3 (432 aa).

Residue Lys21 forms a Glycyl lysine isopeptide (Lys-Gly) (interchain with G-Cter in SUMO2) linkage. Residues 40-69 (IEELDTLQLELETLLSSASRRLRVLEAETQ) are a coiled coil. The tract at residues 87–127 (ARDHELGAPPKHGKPKKQKLEGKTGHGPGPGPGRPKSKNVQ) is disordered. Lys129 participates in a covalent cross-link: Glycyl lysine isopeptide (Lys-Gly) (interchain with G-Cter in SUMO2). Residues 272-319 (NIISPMEDSPIPDMSGKESGADGASTSPRNQNKPFSVPHTKSLESRIK) are disordered. Phosphoserine is present on residues Ser280 and Ser298. Residues 295–305 (ASTSPRNQNKP) are compositionally biased toward polar residues. A coiled-coil region spans residues 367–407 (LLRLAKEEVSRQELRQRVRMADNEVMDAFRKIMAARQKKRT). Lys418 carries the post-translational modification N6-acetyllysine.

Belongs to the NGG1 family. In terms of assembly, the PCAF complex is composed of a number of TBP-associated factors (TAFS), such as TAF5, TAF5L, TAF6, TAF6L, TAF9, TAF10 and TAF12, PCAF, and also PCAF-associated factors (PAFs), such as TADA2L/ADA2, TADA3L/ADA3 and SPT3. Interacts directly with TADA2L and PCAF and also with the high-risk HPV oncoprotein E6. Component of the STAGA transcription coactivator-HAT complex, at least composed of SUPT3H, GCN5L2, TAF5L, TAF6L, SUPT7L, TADA3L, TAD1L, TAF10, TAF12, TRRAP and TAF9. Component of the TFTC-HAT complex. Component of the ADA2A-containing complex (ATAC), composed of KAT14, KAT2A, TADA2L, TADA3L, ZZ3, MBIP, WDR5, YEATS2, CCDC101 and DR1.

It is found in the nucleus. In terms of biological role, functions as a component of the PCAF complex. The PCAF complex is capable of efficiently acetylating histones in a nucleosomal context. The PCAF complex could be considered as the human version of the yeast SAGA complex. Also known as a coactivator for p53/TP53-dependent transcriptional activation. Component of the ATAC complex, a complex with histone acetyltransferase activity on histones H3 and H4. The protein is Transcriptional adapter 3 (Tada3) of Rattus norvegicus (Rat).